The following is a 181-amino-acid chain: Cytochrome P450 monooxygenase dtpC (181 aa).

A heme-binding site is contributed by Cys-125.

The protein belongs to the cytochrome P450 family. Heme is required as a cofactor.

The protein operates within alkaloid biosynthesis. Its pathway is secondary metabolite biosynthesis. Cytochrome P450 monooxygenase; part of the gene cluster that mediates the biosynthesis of the dimeric diketopiperazine alkaloid ditryptophenaline. The nonribosomal peptide synthase dtpA accepts L-tryptophan and L-phenylalanine as its substrates and forms the phenylalanyl-tryptophanyl cyclic dipeptide product cyclophenylalanyltryptophenyl. The N-methyltransferase dtpB is responsible for the N-methylation of cyclophenylalanyltryptophenyl to yield cyclo-N-methylphenylalanyltryptophenyl. The cytochrome P450 monooxygenase is responsible not only for pyrroloindole ring formation but also for concurrent dimerization of N-methylphenylalanyltryptophanyl diketopiperazine monomers into a homodimeric product. This is Cytochrome P450 monooxygenase dtpC from Aspergillus flavus (strain ATCC 200026 / FGSC A1120 / IAM 13836 / NRRL 3357 / JCM 12722 / SRRC 167).